We begin with the raw amino-acid sequence, 1896 residues long: Obscurin-like protein 1 (1896 aa).

The residue at position 10 (Ser10) is a Phosphoserine. The 89-residue stretch at 12–100 folds into the Ig-like 1 domain; that stretch reads PCFLRFPRPV…GEAYAAAAVT (89 aa). The segment at 17 to 19 is interaction with TTN; sequence FPR. A disulfide bond links Cys33 and Cys84. An interaction with TTN region spans residues 85–94; that stretch reads RARNAAGEAY. The tract at residues 106 to 127 is disordered; the sequence is ASDPELQPAERPLPSPGSGEGA. 3 consecutive Ig-like domains span residues 128 to 225, 243 to 330, and 339 to 425; these read PVFL…ALLQ, PVVE…QTLS, and PRLR…ANVT. 3 disulfides stabilise this stretch: Cys149-Cys209, Cys267-Cys319, and Cys362-Cys412. Residues 517 to 615 enclose the Fibronectin type-III domain; that stretch reads PPGPPILAEM…FHGSAHLVPT (99 aa). 10 Ig-like domains span residues 714–800, 804–893, 902–982, 986–1075, 1078–1172, 1174–1261, 1265–1357, 1357–1534, 1628–1720, and 1794–1896; these read PVHI…FGVT, PPVH…VTIT, PSGK…FTVT, PPVR…VTVT, PERI…PPVQ, LALE…FTVQ, PPVR…VEEP, PLLV…ARLS, PVTI…RTVA, and PAQS…VEGN. 6 disulfide bridges follow: Cys738/Cys788, Cys829/Cys879, Cys920/Cys970, Cys1011/Cys1061, Cys1103/Cys1153, and Cys1195/Cys1245. 2 disulfide bridges follow: Cys1381–Cys1522 and Cys1650–Cys1700.

As to quaternary structure, component of the 3M complex, composed of core components CUL7, CCDC8 and OBSL1. Interacts with CCDC8. Interacts with CUL7; the interaction is direct. Interacts with FBXW8. Interacts (via N-terminal Ig-like domain) with TTN/titin (via C-terminal Ig-like domain); the interaction is direct. In terms of tissue distribution, widely expressed, with predominant levels found in the heart.

Its subcellular location is the cytoplasm. The protein localises to the cytoskeleton. It is found in the microtubule organizing center. The protein resides in the centrosome. It localises to the perinuclear region. Its subcellular location is the golgi apparatus. Functionally, core component of the 3M complex, a complex required to regulate microtubule dynamics and genome integrity. It is unclear how the 3M complex regulates microtubules, it could act by controlling the level of a microtubule stabilizer. Acts as a regulator of the Cul7-RING(FBXW8) ubiquitin-protein ligase, playing a critical role in the ubiquitin ligase pathway that regulates Golgi morphogenesis and dendrite patterning in brain. Required to localize CUL7 to the Golgi apparatus in neurons. The polypeptide is Obscurin-like protein 1 (Homo sapiens (Human)).